The sequence spans 1019 residues: MEPGEVKDRILENISLSVKKLQSYFAACEDEIPAIRNHDKVLQRLCEHLDHALLYGLQDLSSGYWVLVVHFTRREAIKQIEVLQHVATNLGRSRAWLYLALNENSLESYLRLFQENLGLLHKYYVKNALVCSHDHLTLFLTLVSGLEFIRFELDLDAPYLDLAPYMPDYYKPQYLLDFEDRLPSSVHGSDSLSLNSFNSVTSTNLEWDDSAIAPSSEDYDFGDVFPAVPSVPSTDWEDGDLTDTVSGPRSTASDLTSSKASTRSPTQRQNPFNEEPAETVSSSDTTPVHTTSQEKEEAQALDPPDACTELEVIRVTKKKKIGKKKKSRSDEEASPLHPACSQKKCAKQGDGDSRNGSPSLGRDSPDTMLASPQEEGEGPSSTTESSERSEPGLLIPEMKDTSMERLGQPLSKVIDQLNGQLDPSTWCSRAEPPDQSFRTGSPGDAPERPPLCDFSEGLSAPMDFYRFTVESPSTVTSGGGHHDPAGLGQPLHVPSSPEAAGQEEEGGGGEGQTPRPLEDTTREAQELEAQLSLVREGPVSEPEPGTQEVLCQLKRDQPSPCLSSAEDSGVDEGQGSPSEMVHSSEFRVDNNHLLLLMIHVFRENEEQLFKMIRMSTGHMEGNLQLLYVLLTDCYVYLLRKGATEKPYLVEEAVSYNELDYVSVGLDQQTVKLVCTNRRKQFLLDTADVALAEFFLASLKSAMIKGCREPPYPSILTDATMEKLALAKFVAQESKCEASAVTVRFYGLVHWEDPTDESLGPTPCHCSPPEGTITKEGMLHYKAGTSYLGKEHWKTCFVVLSNGILYQYPDRTDVIPLLSVNMGGEQCGGCRRANTTDRPHAFQVILSDRPCLELSAESEAEMAEWMQHLCQAVSKGVIPQGVAPSPCIPCCLVLTDDRLFTCHEDCQTSFFRSLGTAKLGDISAVSTEPGKEYCVLEFSQDSQQLLPPWVIYLSCTSELDRLLSALNSGWKTIYQVDLPHTAIQEASNKKKFEDALSLIHSAWQRSDSLCRGRASRDPWC.

Residue methionine 1 is modified to N-acetylmethionine. Residues 1 to 310 form an interaction with KIF5B region; it reads MEPGEVKDRI…LDPPDACTEL (310 aa). The RUN domain occupies 36–158; the sequence is RNHDKVLQRL…IRFELDLDAP (123 aa). Disordered stretches follow at residues 230 to 458, 471 to 525, and 557 to 581; these read SVPS…SEGL, SPST…REAQ, and QPSP…SEMV. Composition is skewed to polar residues over residues 243–272 and 279–291; these read DTVS…QNPF and TVSS…VHTT. Residues 315-327 show a composition bias toward basic residues; it reads VTKKKKIGKKKKS. A compositionally biased stretch (polar residues) spans 417-427; sequence LNGQLDPSTWC. Serine 441 carries the phosphoserine modification. Basic and acidic residues predominate over residues 516 to 525; it reads PLEDTTREAQ. Residues 762 to 885 form an interaction with sifA region; the sequence is PCHCSPPEGT…VIPQGVAPSP (124 aa). A PH domain is found at 771–873; it reads TITKEGMLHY…WMQHLCQAVS (103 aa).

Interacts with KLC2 (via TPR repeats). Interacts with KIF5B. Interacts with BORCS5. Interacts (via RUN domain) with ARL8B (GTP-bound form); PLEKHM1 and PLEKHM2 compete for interaction with ARL8B. Interacts with ARL8A. In terms of assembly, (Microbial infection) Interacts with the S.typhimurium sifA protein; required for S.typhimurium infection.

The protein resides in the cytoplasm. The protein localises to the lysosome membrane. Functionally, plays a role in lysosomes movement and localization at the cell periphery acting as an effector of ARL8B. Required for ARL8B to exert its effects on lysosome location, recruits kinesin-1 to lysosomes and hence direct their movement toward microtubule plus ends. Binding to ARL8B provides a link from lysosomal membranes to plus-end-directed motility. Critical factor involved in NK cell-mediated cytotoxicity. Drives the polarization of cytolytic granules and microtubule-organizing centers (MTOCs) toward the immune synapse between effector NK lymphocytes and target cells. Required for maintenance of the Golgi apparatus organization. May play a role in membrane tubulation. The polypeptide is Pleckstrin homology domain-containing family M member 2 (Homo sapiens (Human)).